The following is a 550-amino-acid chain: CTP synthase (550 aa).

Residues 1–266 are amidoligase domain; the sequence is MNVNYIFVTG…DEYICKYFNL (266 aa). Ser14 is a binding site for CTP. Ser14 lines the UTP pocket. ATP contacts are provided by residues 15–20 and Asp72; that span reads SLGKGI. Residues Asp72 and Glu140 each coordinate Mg(2+). CTP is bound by residues 147-149, 187-192, and Lys223; these read DIE and KTKPTQ. UTP-binding positions include 187-192 and Lys223; that span reads KTKPTQ. The 256-residue stretch at 291 to 546 folds into the Glutamine amidotransferase type-1 domain; that stretch reads TIGIVGKYIR…INAAIQYQCK (256 aa). L-glutamine is bound at residue Gly353. The active-site Nucleophile; for glutamine hydrolysis is the Cys380. L-glutamine contacts are provided by residues 381-384, Glu404, and Arg474; that span reads LGMQ. Residues His519 and Glu521 contribute to the active site.

The protein belongs to the CTP synthase family. As to quaternary structure, homotetramer.

The enzyme catalyses UTP + L-glutamine + ATP + H2O = CTP + L-glutamate + ADP + phosphate + 2 H(+). It catalyses the reaction L-glutamine + H2O = L-glutamate + NH4(+). It carries out the reaction UTP + NH4(+) + ATP = CTP + ADP + phosphate + 2 H(+). It participates in pyrimidine metabolism; CTP biosynthesis via de novo pathway; CTP from UDP: step 2/2. With respect to regulation, allosterically activated by GTP, when glutamine is the substrate; GTP has no effect on the reaction when ammonia is the substrate. The allosteric effector GTP functions by stabilizing the protein conformation that binds the tetrahedral intermediate(s) formed during glutamine hydrolysis. Inhibited by the product CTP, via allosteric rather than competitive inhibition. Its function is as follows. Catalyzes the ATP-dependent amination of UTP to CTP with either L-glutamine or ammonia as the source of nitrogen. Regulates intracellular CTP levels through interactions with the four ribonucleotide triphosphates. This chain is CTP synthase, found in Blochmanniella floridana.